The sequence spans 87 residues: Citrate lyase acyl carrier protein (87 aa).

O-(phosphoribosyl dephospho-coenzyme A)serine is present on serine 14.

It belongs to the CitD family. As to quaternary structure, oligomer with a subunit composition of (alpha,beta,gamma)6.

The protein localises to the cytoplasm. Its function is as follows. Covalent carrier of the coenzyme of citrate lyase. The chain is Citrate lyase acyl carrier protein from Treponema denticola (strain ATCC 35405 / DSM 14222 / CIP 103919 / JCM 8153 / KCTC 15104).